A 191-amino-acid chain; its full sequence is Large ribosomal subunit protein eL15 (191 aa).

This sequence belongs to the eukaryotic ribosomal protein eL15 family.

The chain is Large ribosomal subunit protein eL15 (rpl15e) from Pyrobaculum aerophilum (strain ATCC 51768 / DSM 7523 / JCM 9630 / CIP 104966 / NBRC 100827 / IM2).